Reading from the N-terminus, the 391-residue chain is Aspartate aminotransferase (391 aa).

Positions 40 and 176 each coordinate L-aspartate. N6-(pyridoxal phosphate)lysine is present on K236. R366 is a binding site for L-aspartate.

Belongs to the class-I pyridoxal-phosphate-dependent aminotransferase family. As to quaternary structure, homodimer. Pyridoxal 5'-phosphate is required as a cofactor.

The protein resides in the cytoplasm. The enzyme catalyses L-aspartate + 2-oxoglutarate = oxaloacetate + L-glutamate. This is Aspartate aminotransferase (aspC) from Pyrococcus horikoshii (strain ATCC 700860 / DSM 12428 / JCM 9974 / NBRC 100139 / OT-3).